Consider the following 325-residue polypeptide: Tetraacyldisaccharide 4'-kinase (325 aa).

ATP is bound at residue 55–62 (TAGGNGKT).

Belongs to the LpxK family.

It catalyses the reaction a lipid A disaccharide + ATP = a lipid IVA + ADP + H(+). It functions in the pathway glycolipid biosynthesis; lipid IV(A) biosynthesis; lipid IV(A) from (3R)-3-hydroxytetradecanoyl-[acyl-carrier-protein] and UDP-N-acetyl-alpha-D-glucosamine: step 6/6. In terms of biological role, transfers the gamma-phosphate of ATP to the 4'-position of a tetraacyldisaccharide 1-phosphate intermediate (termed DS-1-P) to form tetraacyldisaccharide 1,4'-bis-phosphate (lipid IVA). The protein is Tetraacyldisaccharide 4'-kinase of Salmonella agona (strain SL483).